A 380-amino-acid chain; its full sequence is Probable protein phosphatase 2C 2 (380 aa).

In terms of domain architecture, PPM-type phosphatase spans 122–376; the sequence is GYSVYCKRGK…DDISVMLIQL (255 aa). Residues Asp158, Gly159, Asp321, and Asp367 each coordinate Mn(2+).

This sequence belongs to the PP2C family. The cofactor is Mg(2+). Mn(2+) is required as a cofactor.

It catalyses the reaction O-phospho-L-seryl-[protein] + H2O = L-seryl-[protein] + phosphate. It carries out the reaction O-phospho-L-threonyl-[protein] + H2O = L-threonyl-[protein] + phosphate. The sequence is that of Probable protein phosphatase 2C 2 from Arabidopsis thaliana (Mouse-ear cress).